The primary structure comprises 114 residues: Iron-sulfur cluster insertion protein ErpA (114 aa).

Residues C42, C106, and C108 each coordinate iron-sulfur cluster.

This sequence belongs to the HesB/IscA family. As to quaternary structure, homodimer. Iron-sulfur cluster serves as cofactor.

Its function is as follows. Required for insertion of 4Fe-4S clusters for at least IspG. The sequence is that of Iron-sulfur cluster insertion protein ErpA from Yersinia enterocolitica serotype O:8 / biotype 1B (strain NCTC 13174 / 8081).